Here is a 448-residue protein sequence, read N- to C-terminus: Phosphoglucosamine mutase (448 aa).

Catalysis depends on Ser-100, which acts as the Phosphoserine intermediate. Mg(2+) contacts are provided by Ser-100, Asp-240, Asp-242, and Asp-244. Ser-100 carries the post-translational modification Phosphoserine.

It belongs to the phosphohexose mutase family. Mg(2+) serves as cofactor. In terms of processing, activated by phosphorylation.

It carries out the reaction alpha-D-glucosamine 1-phosphate = D-glucosamine 6-phosphate. Its function is as follows. Catalyzes the conversion of glucosamine-6-phosphate to glucosamine-1-phosphate. The polypeptide is Phosphoglucosamine mutase (Alkaliphilus metalliredigens (strain QYMF)).